Here is a 76-residue protein sequence, read N- to C-terminus: UPF0248 protein MMP0286 (76 aa).

The protein belongs to the UPF0248 family.

This Methanococcus maripaludis (strain DSM 14266 / JCM 13030 / NBRC 101832 / S2 / LL) protein is UPF0248 protein MMP0286.